Here is a 593-residue protein sequence, read N- to C-terminus: ATP-dependent lipid A-core flippase (593 aa).

6 helical membrane passes run 33–55 (YIFLSADASMIYLINPILNYGFG), 67–87 (ILMLMGVGMVGFIALRSVGSF), 146–166 (AIITVVQDGTFVIGLIVVMFV), 169–189 (WQLSLFLIVVGPFLGLFISII), 258–278 (VIQIIASLVLAFSLFTIAIFG), and 284–304 (GSSWLTAGSFASFFAAAAAIL). In terms of domain architecture, ABC transmembrane type-1 spans 38–319 (ADASMIYLIN…LTKVNVVIQK (282 aa)). In terms of domain architecture, ABC transporter spans 351–585 (VTIKDLSFAF…GGLYTGSINR (235 aa)). 383–390 (GKSGSGKT) lines the ATP pocket.

Belongs to the ABC transporter superfamily. Lipid exporter (TC 3.A.1.106) family. In terms of assembly, homodimer.

It is found in the cell membrane. It catalyses the reaction ATP + H2O + lipid A-core oligosaccharideSide 1 = ADP + phosphate + lipid A-core oligosaccharideSide 2.. In terms of biological role, involved in lipopolysaccharide (LPS) biosynthesis. Translocates lipid A-core from the inner to the outer leaflet of the inner membrane. Transmembrane domains (TMD) form a pore in the inner membrane and the ATP-binding domain (NBD) is responsible for energy generation. This Francisella novicida protein is ATP-dependent lipid A-core flippase.